A 397-amino-acid polypeptide reads, in one-letter code: Succinate--CoA ligase [ADP-forming] subunit beta (397 aa).

One can recognise an ATP-grasp domain in the interval 9 to 254; sequence KALLKSFGAP…TTEEDEKEIE (246 aa). Residues Lys46, 53–55, Glu109, Ala112, and Glu117 each bind ATP; that span reads GRG. Mg(2+) contacts are provided by Asn209 and Asp223. Residues Asn274 and 331-333 contribute to the substrate site; that span reads GIM.

This sequence belongs to the succinate/malate CoA ligase beta subunit family. As to quaternary structure, heterotetramer of two alpha and two beta subunits. Mg(2+) is required as a cofactor.

The catalysed reaction is succinate + ATP + CoA = succinyl-CoA + ADP + phosphate. It carries out the reaction GTP + succinate + CoA = succinyl-CoA + GDP + phosphate. The protein operates within carbohydrate metabolism; tricarboxylic acid cycle; succinate from succinyl-CoA (ligase route): step 1/1. Succinyl-CoA synthetase functions in the citric acid cycle (TCA), coupling the hydrolysis of succinyl-CoA to the synthesis of either ATP or GTP and thus represents the only step of substrate-level phosphorylation in the TCA. The beta subunit provides nucleotide specificity of the enzyme and binds the substrate succinate, while the binding sites for coenzyme A and phosphate are found in the alpha subunit. The sequence is that of Succinate--CoA ligase [ADP-forming] subunit beta from Mesorhizobium japonicum (strain LMG 29417 / CECT 9101 / MAFF 303099) (Mesorhizobium loti (strain MAFF 303099)).